Here is a 113-residue protein sequence, read N- to C-terminus: UPF0102 protein SUN_0231 (113 aa).

It belongs to the UPF0102 family.

This Sulfurovum sp. (strain NBC37-1) protein is UPF0102 protein SUN_0231.